Here is a 352-residue protein sequence, read N- to C-terminus: Beta-1,4-xylanase (352 aa).

An N-terminal signal peptide occupies residues 1–23 (MINQRFSILVLLLILLTFSLGFL). The GH10 domain occupies 29-352 (GMEIPSLKEV…KKAFWEIVKF (324 aa)). Glu155 acts as the Proton donor in catalysis. Glu262 serves as the catalytic Nucleophile.

The protein belongs to the glycosyl hydrolase 10 (cellulase F) family.

It is found in the secreted. It carries out the reaction Endohydrolysis of (1-&gt;4)-beta-D-xylosidic linkages in xylans.. Its pathway is glycan degradation; xylan degradation. This is Beta-1,4-xylanase (xynA) from Dictyoglomus thermophilum.